We begin with the raw amino-acid sequence, 536 residues long: GMP synthase [glutamine-hydrolyzing] (536 aa).

A Glutamine amidotransferase type-1 domain is found at 4 to 206 (KILILDFGSQ…VLDICGARAD (203 aa)). The active-site Nucleophile is the cysteine 85. Residues histidine 180 and glutamate 182 contribute to the active site. Residues 207 to 404 (WIMGDYISEA…LGLPYHMVYR (198 aa)) form the GMPS ATP-PPase domain. 234 to 240 (SGGVDSS) serves as a coordination point for ATP.

Homodimer.

It carries out the reaction XMP + L-glutamine + ATP + H2O = GMP + L-glutamate + AMP + diphosphate + 2 H(+). It functions in the pathway purine metabolism; GMP biosynthesis; GMP from XMP (L-Gln route): step 1/1. Its function is as follows. Catalyzes the synthesis of GMP from XMP. The polypeptide is GMP synthase [glutamine-hydrolyzing] (Albidiferax ferrireducens (strain ATCC BAA-621 / DSM 15236 / T118) (Rhodoferax ferrireducens)).